A 123-amino-acid chain; its full sequence is Large ribosomal subunit protein bL12 (123 aa).

The protein belongs to the bacterial ribosomal protein bL12 family. As to quaternary structure, homodimer. Part of the ribosomal stalk of the 50S ribosomal subunit. Forms a multimeric L10(L12)X complex, where L10 forms an elongated spine to which 2 to 4 L12 dimers bind in a sequential fashion. Binds GTP-bound translation factors.

Forms part of the ribosomal stalk which helps the ribosome interact with GTP-bound translation factors. Is thus essential for accurate translation. The polypeptide is Large ribosomal subunit protein bL12 (Chlorobium luteolum (strain DSM 273 / BCRC 81028 / 2530) (Pelodictyon luteolum)).